The sequence spans 151 residues: Small ribosomal subunit protein uS15 (151 aa).

The tract at residues Met-1–Thr-20 is disordered.

It belongs to the universal ribosomal protein uS15 family. In terms of assembly, part of the 30S ribosomal subunit.

In Methanococcus maripaludis (strain C5 / ATCC BAA-1333), this protein is Small ribosomal subunit protein uS15.